Here is a 454-residue protein sequence, read N- to C-terminus: Guanine deaminase (454 aa).

Zn(2+) contacts are provided by His-82 and His-84. Residues 84–87 (HAPQ), 213–214 (RF), 240–243 (HISE), and Asp-330 contribute to the substrate site. 2 residues coordinate Zn(2+): His-240 and Asp-330. Position 453 is a phosphoserine (Ser-453).

Belongs to the metallo-dependent hydrolases superfamily. ATZ/TRZ family. In terms of assembly, homodimer. The cofactor is Zn(2+).

It carries out the reaction guanine + H2O + H(+) = xanthine + NH4(+). The protein operates within purine metabolism; guanine degradation; xanthine from guanine: step 1/1. Catalyzes the hydrolytic deamination of guanine, producing xanthine and ammonia. This Rattus norvegicus (Rat) protein is Guanine deaminase (Gda).